The sequence spans 354 residues: Uroporphyrinogen decarboxylase (354 aa).

Residues 27-31 (RQAGR), Asp77, Tyr154, Thr209, and His327 contribute to the substrate site.

It belongs to the uroporphyrinogen decarboxylase family. Homodimer.

It is found in the cytoplasm. It catalyses the reaction uroporphyrinogen III + 4 H(+) = coproporphyrinogen III + 4 CO2. It participates in porphyrin-containing compound metabolism; protoporphyrin-IX biosynthesis; coproporphyrinogen-III from 5-aminolevulinate: step 4/4. Functionally, catalyzes the decarboxylation of four acetate groups of uroporphyrinogen-III to yield coproporphyrinogen-III. This chain is Uroporphyrinogen decarboxylase, found in Pseudomonas putida (strain ATCC 700007 / DSM 6899 / JCM 31910 / BCRC 17059 / LMG 24140 / F1).